We begin with the raw amino-acid sequence, 264 residues long: Tropomyosin Cha f 1.0101 (264 aa).

Methionine 1 is subject to N-acetylmethionine. Disordered stretches follow at residues 1–56 and 92–126; these read MDAI…VENE and IQLP…SERM. A coiled-coil region spans residues 1–264; the sequence is MDAIKKKMQA…RLEDELVNEK (264 aa). Basic and acidic residues predominate over residues 12–45; sequence KLEKDNAMDRADTLEQQNKEANLRAEKTEEEIRA.

The protein belongs to the tropomyosin family. As to quaternary structure, homodimer. As to expression, expressed in muscle (at protein level). Expressed in claw muscles.

Functionally, tropomyosin, in association with the troponin complex, plays a central role in the calcium dependent regulation of muscle contraction. The chain is Tropomyosin Cha f 1.0101 from Charybdis feriata (Crucifix crab).